The chain runs to 81 residues: Sulfur carrier protein TusA (81 aa).

Catalysis depends on C19, which acts as the Cysteine persulfide intermediate.

Belongs to the sulfur carrier protein TusA family. Interacts with IscS.

The protein localises to the cytoplasm. The protein operates within tRNA modification. Functionally, sulfur carrier protein involved in sulfur trafficking in the cell. Part of a sulfur-relay system required for 2-thiolation during synthesis of 2-thiouridine of the modified wobble base 5-methylaminomethyl-2-thiouridine (mnm(5)s(2)U) in tRNA. Interacts with IscS and stimulates its cysteine desulfurase activity. Accepts an activated sulfur from IscS, which is then transferred to TusD, and thus determines the direction of sulfur flow from IscS to 2-thiouridine formation. Also appears to be involved in sulfur transfer for the biosynthesis of molybdopterin. This chain is Sulfur carrier protein TusA, found in Erwinia tasmaniensis (strain DSM 17950 / CFBP 7177 / CIP 109463 / NCPPB 4357 / Et1/99).